Here is a 242-residue protein sequence, read N- to C-terminus: Aliphatic sulfonates import ATP-binding protein SsuB 1 (242 aa).

In terms of domain architecture, ABC transporter spans 11–227 (VAVRRLSRAF…RPSHPDFEDL (217 aa)). An ATP-binding site is contributed by 43 to 50 (GESGSGKT).

The protein belongs to the ABC transporter superfamily. Aliphatic sulfonates importer (TC 3.A.1.17.2) family. The complex is composed of two ATP-binding proteins (SsuB), two transmembrane proteins (SsuC) and a solute-binding protein (SsuA).

It is found in the cell inner membrane. The enzyme catalyses ATP + H2O + aliphatic sulfonate-[sulfonate-binding protein]Side 1 = ADP + phosphate + aliphatic sulfonateSide 2 + [sulfonate-binding protein]Side 1.. Functionally, part of the ABC transporter complex SsuABC involved in aliphatic sulfonates import. Responsible for energy coupling to the transport system. The polypeptide is Aliphatic sulfonates import ATP-binding protein SsuB 1 (Paracoccus denitrificans (strain Pd 1222)).